The primary structure comprises 406 residues: MKAVIIGAGEVGYHIAKALSPKNDVVIIDKDEEAAKRADELDVLVIEGNGANAEILSRVLQNADLLVAVTGVDEVNIVACMTAKLIMKNKNGWKDTKTIARVSNPDYIDSPVTSRAQVGVDLMICPELALASEVADILSSPSAIDAEMFAEGKVRMTEFAISPESKLVGKHMQDLKLADCCIVSAVFREDQIIIPHGDDLIKANDHMVVVGKPESMEDLESVFGSKVSHRTRILLIGCGIVGMYLAKLIDKEENADLRIIEHSKSRCIEVAEILENALVLNGDGTDVSLLREENIEDMDVVVAVTDSDEKNLLCSLLAKQLGAKKVIARADRSDYLPLFEMVGIDMAVSPREATVNEVLKLTMGRGIQTLTTIEGERAEIIEYTASEKSRIVGKPLNKVKFPKGAP.

Residues 1–124 (MKAVIIGAGE…RAQVGVDLMI (124 aa)) form the RCK N-terminal 1 domain. NAD(+) is bound by residues 7–11 (GAGEV), D29, 70–71 (TG), and R101. The RCK C-terminal domain maps to 144–225 (IDAEMFAEGK…MEDLESVFGS (82 aa)). The RCK N-terminal 2 domain occupies 230–348 (RTRILLIGCG…FEMVGIDMAV (119 aa)). Residue 232–262 (RILLIGCGIVGMYLAKLIDKEENADLRIIEH) coordinates NAD(+).

Functionally, part of a potassium transport system. The protein is Trk system potassium uptake protein trkA homolog 1 (trkA1) of Methanosarcina mazei (Methanosarcina frisia).